Here is a 1100-residue protein sequence, read N- to C-terminus: ATP-dependent DNA helicase mph1 (1100 aa).

The span at Met1–Ala21 shows a compositional bias: acidic residues. The segment at Met1–Asn250 is disordered. Low complexity predominate over residues Arg38 to Phe61. Residues Phe84–Ser94 show a composition bias toward basic and acidic residues. A compositionally biased stretch (polar residues) spans Asn104–Gln117. The span at Pro135–Pro146 shows a compositional bias: pro residues. Composition is skewed to polar residues over residues Arg182 to Ser191 and Asn200 to Glu209. The span at Asp212–Asp223 shows a compositional bias: acidic residues. Positions Ser237–Ser249 are enriched in low complexity. The region spanning Ile317–Lys485 is the Helicase ATP-binding domain. ATP is bound at residue Leu330–Thr337. The DEAH box motif lies at Asp433–His436. The 175-residue stretch at Tyr655–Lys829 folds into the Helicase C-terminal domain. Disordered stretches follow at residues Pro850–Val913 and Arg1003–Arg1100. Basic residues-rich tracts occupy residues Arg863 to Phe875 and Gly1019 to Arg1028. Residues Gln1053–Asp1066 are compositionally biased toward polar residues. The span at Leu1082–Asp1092 shows a compositional bias: acidic residues.

This sequence belongs to the DEAD box helicase family. DEAH subfamily. FANCM sub-subfamily. As to quaternary structure, interacts with the MHF histone-fold complex to form the FANCM-MHF complex.

It localises to the nucleus. The enzyme catalyses ATP + H2O = ADP + phosphate + H(+). ATP-dependent DNA helicase involved in DNA damage repair by homologous recombination and in genome maintenance. Capable of unwinding D-loops. Plays a role in limiting crossover recombinants during mitotic DNA double-strand break (DSB) repair. Component of a FANCM-MHF complex which promotes gene conversion at blocked replication forks, probably by reversal of the stalled fork. The polypeptide is ATP-dependent DNA helicase mph1 (Aspergillus terreus (strain NIH 2624 / FGSC A1156)).